Reading from the N-terminus, the 246-residue chain is 5-oxoprolinase subunit A (246 aa).

Belongs to the LamB/PxpA family. As to quaternary structure, forms a complex composed of PxpA, PxpB and PxpC.

It catalyses the reaction 5-oxo-L-proline + ATP + 2 H2O = L-glutamate + ADP + phosphate + H(+). Functionally, catalyzes the cleavage of 5-oxoproline to form L-glutamate coupled to the hydrolysis of ATP to ADP and inorganic phosphate. The sequence is that of 5-oxoprolinase subunit A from Cupriavidus metallidurans (strain ATCC 43123 / DSM 2839 / NBRC 102507 / CH34) (Ralstonia metallidurans).